The following is a 1427-amino-acid chain: DNA-directed RNA polymerase subunit beta' (1427 aa).

Positions 66, 68, 81, and 84 each coordinate Zn(2+). The Mg(2+) site is built by Asp472, Asp474, and Asp476. Residues Cys815, Cys889, Cys896, and Cys899 each contribute to the Zn(2+) site.

The protein belongs to the RNA polymerase beta' chain family. In terms of assembly, the RNAP catalytic core consists of 2 alpha, 1 beta, 1 beta' and 1 omega subunit. When a sigma factor is associated with the core the holoenzyme is formed, which can initiate transcription. The cofactor is Mg(2+). It depends on Zn(2+) as a cofactor.

It catalyses the reaction RNA(n) + a ribonucleoside 5'-triphosphate = RNA(n+1) + diphosphate. In terms of biological role, DNA-dependent RNA polymerase catalyzes the transcription of DNA into RNA using the four ribonucleoside triphosphates as substrates. The sequence is that of DNA-directed RNA polymerase subunit beta' from Bacteroides thetaiotaomicron (strain ATCC 29148 / DSM 2079 / JCM 5827 / CCUG 10774 / NCTC 10582 / VPI-5482 / E50).